Here is a 169-residue protein sequence, read N- to C-terminus: Crossover junction endodeoxyribonuclease RuvC (169 aa).

Active-site residues include D11, E71, and D143. 3 residues coordinate Mg(2+): D11, E71, and D143.

It belongs to the RuvC family. As to quaternary structure, homodimer which binds Holliday junction (HJ) DNA. The HJ becomes 2-fold symmetrical on binding to RuvC with unstacked arms; it has a different conformation from HJ DNA in complex with RuvA. In the full resolvosome a probable DNA-RuvA(4)-RuvB(12)-RuvC(2) complex forms which resolves the HJ. Requires Mg(2+) as cofactor.

It localises to the cytoplasm. It catalyses the reaction Endonucleolytic cleavage at a junction such as a reciprocal single-stranded crossover between two homologous DNA duplexes (Holliday junction).. In terms of biological role, the RuvA-RuvB-RuvC complex processes Holliday junction (HJ) DNA during genetic recombination and DNA repair. Endonuclease that resolves HJ intermediates. Cleaves cruciform DNA by making single-stranded nicks across the HJ at symmetrical positions within the homologous arms, yielding a 5'-phosphate and a 3'-hydroxyl group; requires a central core of homology in the junction. The consensus cleavage sequence is 5'-(A/T)TT(C/G)-3'. Cleavage occurs on the 3'-side of the TT dinucleotide at the point of strand exchange. HJ branch migration catalyzed by RuvA-RuvB allows RuvC to scan DNA until it finds its consensus sequence, where it cleaves and resolves the cruciform DNA. This chain is Crossover junction endodeoxyribonuclease RuvC, found in Bartonella henselae (strain ATCC 49882 / DSM 28221 / CCUG 30454 / Houston 1) (Rochalimaea henselae).